Reading from the N-terminus, the 620-residue chain is Probable serine/threonine-protein kinase RTK1 (620 aa).

Disordered stretches follow at residues 1 to 20 (MVKE…SLFR), 29 to 130 (AKIF…PVRT), 153 to 186 (KDAF…SNLS), 210 to 237 (QAST…KKKS), and 252 to 271 (HDNH…TKPK). Residues 7 to 18 (LHSSSSTSLSSL) are compositionally biased toward low complexity. A compositionally biased stretch (basic and acidic residues) spans 56 to 76 (KNTDSDQEDQIKYNKPNDRRS). Residue T58 is modified to Phosphothreonine. S60 carries the post-translational modification Phosphoserine. Polar residues-rich tracts occupy residues 95 to 107 (VASS…SPTS), 165 to 186 (TAHS…SNLS), and 210 to 222 (QAST…LQHN). Residue S216 is modified to Phosphoserine. Positions 254–263 (NHHHHHHHNR) are enriched in basic residues. The 274-residue stretch at 302 to 575 (GIPGRKLGEG…MNDVVKDDWL (274 aa)) folds into the Protein kinase domain. ATP contacts are provided by residues 308–316 (LGEGASGSV) and K330. K334 participates in a covalent cross-link: Glycyl lysine isopeptide (Lys-Gly) (interchain with G-Cter in ubiquitin). D430 functions as the Proton acceptor in the catalytic mechanism.

It belongs to the protein kinase superfamily. Ser/Thr protein kinase family. As to quaternary structure, interacts with ribosome biogenesis factors ARC1, CKA2 and GUS1.

It carries out the reaction L-seryl-[protein] + ATP = O-phospho-L-seryl-[protein] + ADP + H(+). The catalysed reaction is L-threonyl-[protein] + ATP = O-phospho-L-threonyl-[protein] + ADP + H(+). Its function is as follows. Probable serine/threonine-protein kinase that may be involved in ribosome biogenesis. The chain is Probable serine/threonine-protein kinase RTK1 (RTK1) from Saccharomyces cerevisiae (strain ATCC 204508 / S288c) (Baker's yeast).